Reading from the N-terminus, the 236-residue chain is Small ribosomal subunit protein uS5 (236 aa).

The segment covering Met-1–Gln-10 has biased composition (basic and acidic residues). The disordered stretch occupies residues Met-1–Lys-64. Over residues Val-11 to Thr-27 the composition is skewed to low complexity. The segment covering Thr-28–Lys-64 has biased composition (basic and acidic residues). The 64-residue stretch at Phe-67–Val-130 folds into the S5 DRBM domain.

Belongs to the universal ribosomal protein uS5 family. In terms of assembly, part of the 30S ribosomal subunit. Contacts proteins S4 and S8.

Its function is as follows. With S4 and S12 plays an important role in translational accuracy. Located at the back of the 30S subunit body where it stabilizes the conformation of the head with respect to the body. The chain is Small ribosomal subunit protein uS5 from Arthrobacter sp. (strain FB24).